Consider the following 361-residue polypeptide: Peptide chain release factor 1 (361 aa).

Gln-236 is subject to N5-methylglutamine. Residues 286-306 (AADSQRAEARKGQVGSGDRSE) are disordered.

This sequence belongs to the prokaryotic/mitochondrial release factor family. Post-translationally, methylated by PrmC. Methylation increases the termination efficiency of RF1.

The protein resides in the cytoplasm. Peptide chain release factor 1 directs the termination of translation in response to the peptide chain termination codons UAG and UAA. The polypeptide is Peptide chain release factor 1 (Magnetococcus marinus (strain ATCC BAA-1437 / JCM 17883 / MC-1)).